The chain runs to 351 residues: MATTGRVLLLSPPSLSSHPEKLNAILKSHTRDKTDLQMLDRLAHGLVSLPESTYDIVLLLTGADNTLAETHSLLNRELIQRVVHSLRPAGKLRNRENKPWGLSDGNGSNANSSRRYNDDEQRFRNEVILAGLVFDDKGELLKPDIGAQQAIPLKLSRRRKEKEKTDTLASSANYSTNGTVGAPSSNGISAPIPAAKTTENNPVPPGVGFIDFSDDFGVPAEDDPQDSDEELIDEDELLDEDDMGRQIVQPPECRPKPGKRRRACKDCSCGLSQKLEAKDKAKRATADKALETMKLGSSELAEVDFTVQGKVGSCGNCSLGDAFRCDGCPYIGLPAFKPGEEVRLLNNDVQL.

Residues 1–151 (MATTGRVLLL…KPDIGAQQAI (151 aa)) are N-terminal SAM-like domain. 2 disordered regions span residues 93–118 (RNRENKPWGLSDGNGSNANSSRRYND) and 157–186 (RRRKEKEKTDTLASSANYSTNGTVGAPSSN). Composition is skewed to polar residues over residues 105–114 (GNGSNANSSR) and 167–186 (TLASSANYSTNGTVGAPSSN). A linker region spans residues 152–243 (PLKLSRRRKE…EDELLDEDDM (92 aa)). [2Fe-2S] cluster-binding residues include C253, C264, C267, and C269. The fe-S binding site A stretch occupies residues 253 to 269 (CRPKPGKRRRACKDCSC). The [4Fe-4S] cluster site is built by C314, C317, C325, and C328. 2 consecutive short sequence motifs (cx2C motif) follow at residues 314 to 317 (CGNC) and 325 to 328 (CDGC). A fe-S binding site B region spans residues 314-328 (CGNCSLGDAFRCDGC).

Belongs to the anamorsin family. In terms of assembly, monomer. Interacts with TAH18. Interacts with MIA40. It depends on [2Fe-2S] cluster as a cofactor. Requires [4Fe-4S] cluster as cofactor.

Its subcellular location is the cytoplasm. It is found in the mitochondrion intermembrane space. Its function is as follows. Component of the cytosolic iron-sulfur (Fe-S) protein assembly (CIA) machinery required for the maturation of extramitochondrial Fe-S proteins. Part of an electron transfer chain functioning in an early step of cytosolic Fe-S biogenesis, facilitating the de novo assembly of a [4Fe-4S] cluster on the scaffold complex CFD1-NBP35. Electrons are transferred to DRE2 from NADPH via the FAD- and FMN-containing protein TAH18. TAH18-DRE2 are also required for the assembly of the diferric tyrosyl radical cofactor of ribonucleotide reductase (RNR), probably by providing electrons for reduction during radical cofactor maturation in the catalytic small subunit RNR2. This chain is Fe-S cluster assembly protein DRE2, found in Ajellomyces capsulatus (strain NAm1 / WU24) (Darling's disease fungus).